A 24-amino-acid polypeptide reads, in one-letter code: M-poneritoxin-Ng2b (24 aa).

At Leu-24 the chain carries Leucine amide.

In terms of tissue distribution, expressed by the venom gland.

It localises to the secreted. Has a broad spectrum of activity against both Gram-positive and Gram-negative bacteria. Is inactive against yeast, erythrocytes, and insects. This Neoponera goeldii (Ponerine ant) protein is M-poneritoxin-Ng2b.